The following is a 557-amino-acid chain: Glutamyl-tRNA(Gln) amidotransferase subunit B, mitochondrial (557 aa).

Residues 1-41 constitute a mitochondrion transit peptide; the sequence is MAAPMLRWGCRGRRWAFARVDGGSCHRRGAPTGSTSNQIRG. The segment at 26–45 is disordered; sequence HRRGAPTGSTSNQIRGESSV. Over residues 32–45 the composition is skewed to polar residues; it reads TGSTSNQIRGESSV. Lys529 carries the N6-succinyllysine modification.

The protein belongs to the GatB/GatE family. GatB subfamily. Subunit of the heterotrimeric GatCAB amidotransferase (AdT) complex, composed of A (QRSL1), B (GATB) and C (GATC) subunits. As to expression, predominantly expressed in tissues characterized by high rates of oxidative phosphorylation (OxPhos), including muscle and heart.

Its subcellular location is the mitochondrion. It carries out the reaction L-glutamyl-tRNA(Gln) + L-glutamine + ATP + H2O = L-glutaminyl-tRNA(Gln) + L-glutamate + ADP + phosphate + H(+). In terms of biological role, allows the formation of correctly charged Gln-tRNA(Gln) through the transamidation of misacylated Glu-tRNA(Gln) in the mitochondria. The reaction takes place in the presence of glutamine and ATP through an activated gamma-phospho-Glu-tRNA(Gln). This is Glutamyl-tRNA(Gln) amidotransferase subunit B, mitochondrial from Homo sapiens (Human).